We begin with the raw amino-acid sequence, 210 residues long: Cell division protein SepF (210 aa).

Residues glycine 13–proline 101 are disordered. Composition is skewed to basic and acidic residues over residues glutamate 22–glutamate 70 and valine 83–proline 93.

This sequence belongs to the SepF family. In terms of assembly, homodimer. Interacts with FtsZ.

The protein resides in the cytoplasm. Functionally, cell division protein that is part of the divisome complex and is recruited early to the Z-ring. Probably stimulates Z-ring formation, perhaps through the cross-linking of FtsZ protofilaments. Its function overlaps with FtsA. The polypeptide is Cell division protein SepF (Micrococcus luteus (strain ATCC 4698 / DSM 20030 / JCM 1464 / CCM 169 / CCUG 5858 / IAM 1056 / NBRC 3333 / NCIMB 9278 / NCTC 2665 / VKM Ac-2230) (Micrococcus lysodeikticus)).